The chain runs to 95 residues: Large ribosomal subunit protein bL25 (95 aa).

It belongs to the bacterial ribosomal protein bL25 family. In terms of assembly, part of the 50S ribosomal subunit; part of the 5S rRNA/L5/L18/L25 subcomplex. Contacts the 5S rRNA. Binds to the 5S rRNA independently of L5 and L18.

Its function is as follows. This is one of the proteins that binds to the 5S RNA in the ribosome where it forms part of the central protuberance. The sequence is that of Large ribosomal subunit protein bL25 from Haemophilus influenzae (strain ATCC 51907 / DSM 11121 / KW20 / Rd).